Consider the following 352-residue polypeptide: S-adenosylmethionine:tRNA ribosyltransferase-isomerase (352 aa).

Belongs to the QueA family. As to quaternary structure, monomer.

It is found in the cytoplasm. The enzyme catalyses 7-aminomethyl-7-carbaguanosine(34) in tRNA + S-adenosyl-L-methionine = epoxyqueuosine(34) in tRNA + adenine + L-methionine + 2 H(+). It functions in the pathway tRNA modification; tRNA-queuosine biosynthesis. Its function is as follows. Transfers and isomerizes the ribose moiety from AdoMet to the 7-aminomethyl group of 7-deazaguanine (preQ1-tRNA) to give epoxyqueuosine (oQ-tRNA). The sequence is that of S-adenosylmethionine:tRNA ribosyltransferase-isomerase from Solibacter usitatus (strain Ellin6076).